We begin with the raw amino-acid sequence, 536 residues long: Transcriptional regulator RPN4 (536 aa).

Composition is skewed to low complexity over residues 154-181 and 361-370; these read QEQQSQLPQPQQPISQQDKQRPQSQQQQ and SPSAISPASP. 3 disordered regions span residues 154 to 196, 353 to 375, and 393 to 434; these read QEQQ…TRRR, VFDQPKEVSPSAISPASPDSDDM, and EEIN…AEIT. A compositionally biased stretch (basic and acidic residues) spans 393 to 411; it reads EEINKKHSKSGKKESKSQK. Residues 440–471 form a C2H2-type zinc finger; that stretch reads HQCNLINPSTGEPCNKQFSRPYDLIRHQDTIH.

It localises to the nucleus. Functionally, transcriptional activator of a number of genes encoding proteasomal subunits. Binds to the DNA sequence 5'-GAAGGCAAAA-3', enriched in regions upstream of proteasome genes. The chain is Transcriptional regulator RPN4 (RPN4) from Candida albicans (strain SC5314 / ATCC MYA-2876) (Yeast).